A 449-amino-acid chain; its full sequence is BPI fold-containing family B member 6 (449 aa).

The N-terminal stretch at 1-18 (MLCSLSLVLCGLLAGTRA) is a signal peptide. The N-linked (GlcNAc...) asparagine glycan is linked to Asn-115. A disulfide bridge connects residues Cys-138 and Cys-172.

Belongs to the BPI/LBP/Plunc superfamily. BPI/LBP family.

It is found in the secreted. The polypeptide is BPI fold-containing family B member 6 (Bpifb6) (Mus musculus (Mouse)).